The sequence spans 201 residues: MTAPVIGVLALQGDVREHTAALAAAGADARPVRRPGELDLVDGLVIPGGESTTISRLADVFELREPIDKRIADGMPVYGSCAGMIMLASEVLDGRPDQRAFAGIEMTVRRNAFGRQVHSFEAPVSVAGIDGGPFHVLFIRAPWVERVGQGVEVLGTVTEGPAAGRIVAVRQGNLLATSFHPELTGDRRLHAYFADLVRAAV.

Gly-49–Ser-51 contacts L-glutamine. The active-site Nucleophile is Cys-81. L-glutamine-binding positions include Arg-110 and Ile-139–Arg-140. Active-site charge relay system residues include His-180 and Glu-182.

Belongs to the glutaminase PdxT/SNO family. As to quaternary structure, in the presence of PdxS, forms a dodecamer of heterodimers. Only shows activity in the heterodimer.

The enzyme catalyses aldehydo-D-ribose 5-phosphate + D-glyceraldehyde 3-phosphate + L-glutamine = pyridoxal 5'-phosphate + L-glutamate + phosphate + 3 H2O + H(+). It catalyses the reaction L-glutamine + H2O = L-glutamate + NH4(+). It functions in the pathway cofactor biosynthesis; pyridoxal 5'-phosphate biosynthesis. Catalyzes the hydrolysis of glutamine to glutamate and ammonia as part of the biosynthesis of pyridoxal 5'-phosphate. The resulting ammonia molecule is channeled to the active site of PdxS. The sequence is that of Pyridoxal 5'-phosphate synthase subunit PdxT from Salinispora arenicola (strain CNS-205).